The following is a 466-amino-acid chain: ATP synthase subunit beta (466 aa).

Residue Gly156–Thr163 coordinates ATP.

This sequence belongs to the ATPase alpha/beta chains family. As to quaternary structure, F-type ATPases have 2 components, CF(1) - the catalytic core - and CF(0) - the membrane proton channel. CF(1) has five subunits: alpha(3), beta(3), gamma(1), delta(1), epsilon(1). CF(0) has three main subunits: a(1), b(2) and c(9-12). The alpha and beta chains form an alternating ring which encloses part of the gamma chain. CF(1) is attached to CF(0) by a central stalk formed by the gamma and epsilon chains, while a peripheral stalk is formed by the delta and b chains.

It localises to the cell membrane. It carries out the reaction ATP + H2O + 4 H(+)(in) = ADP + phosphate + 5 H(+)(out). Produces ATP from ADP in the presence of a proton gradient across the membrane. The catalytic sites are hosted primarily by the beta subunits. The protein is ATP synthase subunit beta of Polynucleobacter asymbioticus (strain DSM 18221 / CIP 109841 / QLW-P1DMWA-1) (Polynucleobacter necessarius subsp. asymbioticus).